Here is a 436-residue protein sequence, read N- to C-terminus: UDP-N-acetylmuramoylalanine--D-glutamate ligase (436 aa).

112 to 118 (GSNGKST) contributes to the ATP binding site.

Belongs to the MurCDEF family.

The protein localises to the cytoplasm. The enzyme catalyses UDP-N-acetyl-alpha-D-muramoyl-L-alanine + D-glutamate + ATP = UDP-N-acetyl-alpha-D-muramoyl-L-alanyl-D-glutamate + ADP + phosphate + H(+). It functions in the pathway cell wall biogenesis; peptidoglycan biosynthesis. Its function is as follows. Cell wall formation. Catalyzes the addition of glutamate to the nucleotide precursor UDP-N-acetylmuramoyl-L-alanine (UMA). This is UDP-N-acetylmuramoylalanine--D-glutamate ligase from Photorhabdus laumondii subsp. laumondii (strain DSM 15139 / CIP 105565 / TT01) (Photorhabdus luminescens subsp. laumondii).